The following is a 770-amino-acid chain: Molybdenum cofactor sulfurase (770 aa).

K243 carries the post-translational modification N6-(pyridoxal phosphate)lysine. C405 is an active-site residue. Residues 611-769 enclose the MOSC domain; the sequence is GDEVANWLCQ…LACGDPITVL (159 aa). S726 is modified (phosphoserine).

The protein belongs to the class-V pyridoxal-phosphate-dependent aminotransferase family. MOCOS subfamily. Pyridoxal 5'-phosphate is required as a cofactor.

The catalysed reaction is Mo-molybdopterin + L-cysteine + AH2 = thio-Mo-molybdopterin + L-alanine + A + H2O. It participates in cofactor biosynthesis; molybdopterin biosynthesis. In terms of biological role, sulfurates the molybdenum cofactor. Sulfation of molybdenum is essential for xanthine dehydrogenase (XDH) and aldehyde oxidase (ADO) enzymes in which molybdenum cofactor is liganded by 1 oxygen and 1 sulfur atom in active form. This is Molybdenum cofactor sulfurase from Drosophila grimshawi (Hawaiian fruit fly).